Consider the following 221-residue polypeptide: Nuclear phosphoprotein UL3 homolog (221 aa).

It belongs to the alphaherpesvirinae HHV-1 UL3 family. Post-translationally, phosphorylated.

The protein localises to the host nucleus. The chain is Nuclear phosphoprotein UL3 homolog from Varicella-zoster virus (strain Dumas) (HHV-3).